The sequence spans 71 residues: Antitoxin VapB22 (71 aa).

This sequence belongs to the phD/YefM antitoxin family.

Its function is as follows. Antitoxin component of a type II toxin-antitoxin (TA) system. Upon expression in M.smegmatis neutralizes the effect of cognate toxin VapC22. The polypeptide is Antitoxin VapB22 (vapB22) (Mycobacterium tuberculosis (strain ATCC 25618 / H37Rv)).